Consider the following 379-residue polypeptide: Armadillo repeat-containing X-linked protein 3 (379 aa).

At 1–6 (MGYARK) the chain is on the mitochondrial intermembrane side. Mitochondrion outer membrane (MOM)-targeting sequence regions lie at residues 1–6 (MGYARK) and 26–37 (RLTRGRKQNKEK). A helical; Signal-anchor membrane pass occupies residues 7–29 (VGWVTAGLVIGAGACYCIYRLTR). Residues 30–379 (GRKQNKEKMA…AEHMFPKSQE (350 aa)) lie on the Cytoplasmic side of the membrane. Phosphoserine is present on residues S61, S67, and S72. The nuclear localization signal stretch occupies residues 89 to 98 (RARARARARA). Residues 95–106 (RARATRARRAVQ) show a composition bias toward basic residues. Residues 95–116 (RARATRARRAVQKRASPNSDDT) are disordered. Phosphoserine is present on S110. ARM repeat units follow at residues 111 to 151 (PNSD…NNAA), 153 to 192 (AFNR…NLSV), and 233 to 272 (VTNE…NLAE).

This sequence belongs to the eutherian X-chromosome-specific Armcx family. In terms of assembly, interacts (via ARM domain) with MIRO1, MIRO2 and TRAK2. The interaction with Miro is calcium-dependent. Interacts with SOX10.

The protein resides in the mitochondrion outer membrane. It is found in the cytoplasm. Its subcellular location is the nucleus. Its function is as follows. Regulates mitochondrial aggregation and transport in axons in living neurons. May link mitochondria to the TRAK2-kinesin motor complex via its interaction with Miro and TRAK2. Mitochondrial distribution and dynamics is regulated through ARMCX3 protein degradation, which is promoted by PCK and negatively regulated by WNT1. Enhances the SOX10-mediated transactivation of the neuronal acetylcholine receptor subunit alpha-3 and beta-4 subunit gene promoters. This is Armadillo repeat-containing X-linked protein 3 (ARMCX3) from Homo sapiens (Human).